The chain runs to 230 residues: Cutinase 1 (230 aa).

The first 16 residues, 1–16 (MKFFALTTLLAATASA), serve as a signal peptide directing secretion. Residues 17–31 (LPTSNPAQELEARQL) constitute a propeptide that is removed on maturation. Glycine 32 is modified (N-D-glucuronoyl glycine). Cysteines 47 and 125 form a disulfide. Serine 136 serves as the catalytic Nucleophile. A disulfide bridge links cysteine 187 with cysteine 194. Aspartate 191 is an active-site residue. Histidine 204 acts as the Proton donor/acceptor in catalysis.

The protein belongs to the cutinase family. The 2 disulfide bonds play a critical role in holding the catalytic residues in juxta-position; reduction of the disulfide bridges results in the complete inactivation of the enzyme. Post-translationally, O-glycosylated; contains one mole each of mannose, arabinose, N-acetylglucosamine, and glucuronic acid.

It is found in the secreted. The enzyme catalyses cutin + H2O = cutin monomers.. Inhibited by n-undecyl phosphonate (C11Y4). Inhibited by paraoxon. Catalyzes the hydrolysis of complex carboxylic polyesters found in the cell wall of plants. Degrades cutin, a macromolecule that forms the structure of the plant cuticle. Allows pathogenic fungi to penetrate through the cuticular barrier into the host plant during the initial stage of fungal infection. This is Cutinase 1 (CUT1) from Fusarium vanettenii (Neocosmospora pisi).